We begin with the raw amino-acid sequence, 56 residues long: Large ribosomal subunit protein bL32 (56 aa).

Residues 1–37 are disordered; sequence MAVQQNKKSRSRRDMRRSHDALTTAAVSVDKASGETH. The span at 7-16 shows a compositional bias: basic residues; the sequence is KKSRSRRDMR.

Belongs to the bacterial ribosomal protein bL32 family.

This Haemophilus influenzae (strain PittEE) protein is Large ribosomal subunit protein bL32.